We begin with the raw amino-acid sequence, 407 residues long: Phosphonoacetate hydrolase (407 aa).

Zn(2+) is bound by residues aspartate 25, threonine 64, aspartate 202, histidine 206, aspartate 241, histidine 242, and histidine 368. Substrate is bound by residues threonine 64 and aspartate 202. Residues histidine 242 and histidine 368 each contribute to the substrate site.

Belongs to the alkaline phosphatase family. PhnA subfamily. In terms of assembly, homodimer. Zn(2+) is required as a cofactor.

It catalyses the reaction phosphonoacetate + H2O = acetate + phosphate + H(+). Its activity is regulated as follows. Completely inhibited by EDTA and 1,10-phenanthroline. Moderately inhibited by the phosphonocarboxylic acids phosphonoformate and 3-phosphonopropionate and the phosphonate herbicide glyphosate. Partially inhibited by the reducing agents sodium sulfide and dithiotheitol and the chelating agent iminodiacetate. Nonphosphonate analogs of phosphonoacetate, such as arsonoacetate, sulfonoacetate and malonate are poor inhibitors. Inorganic phosphate, acetate and the known phosphonotase inhibitor phosphite have little effect on activity. Not inhibited by the alkylphosphonic acids methylphosphonate and ethylphosphonate, or the aminoalkylphosphonates 2-aminoethylphosphonate, 3-aminopropylphosphonate and 4-aminobutylphosphonate. Fe(3+), Ca(2+), Mg(2+) and Cs(+) have no effect on activity. Activity is slightly increased by the aminoalkylphosphonates 1-aminoethylphosphonate, 1-aminobutylphosphonate, 2-amino-4-butylphosphonate. Activity is increased by Zn(2+), Mn(2+) and Co(2+), these 3 metal ions also allow recovery of activity after EDTA treatment. Its function is as follows. Specifically hydrolyzes phosphonoacetate. Does not have activity on other organophosphonates or acetates. The chain is Phosphonoacetate hydrolase from Pseudomonas fluorescens.